Here is a 265-residue protein sequence, read N- to C-terminus: Tryptophan synthase alpha chain (265 aa).

Active-site proton acceptor residues include glutamate 48 and aspartate 59.

The protein belongs to the TrpA family. Tetramer of two alpha and two beta chains.

The enzyme catalyses (1S,2R)-1-C-(indol-3-yl)glycerol 3-phosphate + L-serine = D-glyceraldehyde 3-phosphate + L-tryptophan + H2O. It participates in amino-acid biosynthesis; L-tryptophan biosynthesis; L-tryptophan from chorismate: step 5/5. The alpha subunit is responsible for the aldol cleavage of indoleglycerol phosphate to indole and glyceraldehyde 3-phosphate. The protein is Tryptophan synthase alpha chain of Vesicomyosocius okutanii subsp. Calyptogena okutanii (strain HA).